The sequence spans 520 residues: 2-isopropylmalate synthase (520 aa).

Residues 12 to 274 (IRIFDTTLRD…DSAINTPRIV (263 aa)) enclose the Pyruvate carboxyltransferase domain. Residues aspartate 21, histidine 209, histidine 211, and asparagine 245 each coordinate Mn(2+). Residues 396–520 (RLASMTISDV…VIAGKTAAVA (125 aa)) form a regulatory domain region.

This sequence belongs to the alpha-IPM synthase/homocitrate synthase family. LeuA type 1 subfamily. In terms of assembly, homodimer. Requires Mn(2+) as cofactor.

It is found in the cytoplasm. It carries out the reaction 3-methyl-2-oxobutanoate + acetyl-CoA + H2O = (2S)-2-isopropylmalate + CoA + H(+). It functions in the pathway amino-acid biosynthesis; L-leucine biosynthesis; L-leucine from 3-methyl-2-oxobutanoate: step 1/4. Functionally, catalyzes the condensation of the acetyl group of acetyl-CoA with 3-methyl-2-oxobutanoate (2-ketoisovalerate) to form 3-carboxy-3-hydroxy-4-methylpentanoate (2-isopropylmalate). The chain is 2-isopropylmalate synthase from Xanthomonas oryzae pv. oryzae (strain MAFF 311018).